Consider the following 483-residue polypeptide: Protein nucleotidyltransferase YdiU (483 aa).

Residues Gly87, Gly89, Arg90, Lys110, Asp122, Gly123, Arg173, and Arg180 each contribute to the ATP site. Asp249 (proton acceptor) is an active-site residue. Residues Asn250 and Asp259 each contribute to the Mg(2+) site. ATP is bound at residue Asp259.

Belongs to the SELO family. The cofactor is Mg(2+). Requires Mn(2+) as cofactor.

It carries out the reaction L-seryl-[protein] + ATP = 3-O-(5'-adenylyl)-L-seryl-[protein] + diphosphate. The enzyme catalyses L-threonyl-[protein] + ATP = 3-O-(5'-adenylyl)-L-threonyl-[protein] + diphosphate. It catalyses the reaction L-tyrosyl-[protein] + ATP = O-(5'-adenylyl)-L-tyrosyl-[protein] + diphosphate. The catalysed reaction is L-histidyl-[protein] + UTP = N(tele)-(5'-uridylyl)-L-histidyl-[protein] + diphosphate. It carries out the reaction L-seryl-[protein] + UTP = O-(5'-uridylyl)-L-seryl-[protein] + diphosphate. The enzyme catalyses L-tyrosyl-[protein] + UTP = O-(5'-uridylyl)-L-tyrosyl-[protein] + diphosphate. Functionally, nucleotidyltransferase involved in the post-translational modification of proteins. It can catalyze the addition of adenosine monophosphate (AMP) or uridine monophosphate (UMP) to a protein, resulting in modifications known as AMPylation and UMPylation. In Pectobacterium carotovorum subsp. carotovorum (strain PC1), this protein is Protein nucleotidyltransferase YdiU.